A 297-amino-acid polypeptide reads, in one-letter code: Phosphatidylglycerol--prolipoprotein diacylglyceryl transferase (297 aa).

4 helical membrane passes run 20–40, 50–70, 105–125, and 133–153; these read FLTI…GLFV, INPL…IIGA, AVWE…LSII, and IHLK…QSIG. Arg154 is an a 1,2-diacyl-sn-glycero-3-phospho-(1'-sn-glycerol) binding site. 3 helical membrane passes run 193–213, 225–245, and 266–286; these read PTFL…IFVF, GFIS…IEGL, and AQFI…FLRL.

It belongs to the Lgt family.

Its subcellular location is the cell inner membrane. It catalyses the reaction L-cysteinyl-[prolipoprotein] + a 1,2-diacyl-sn-glycero-3-phospho-(1'-sn-glycerol) = an S-1,2-diacyl-sn-glyceryl-L-cysteinyl-[prolipoprotein] + sn-glycerol 1-phosphate + H(+). It participates in protein modification; lipoprotein biosynthesis (diacylglyceryl transfer). Its function is as follows. Catalyzes the transfer of the diacylglyceryl group from phosphatidylglycerol to the sulfhydryl group of the N-terminal cysteine of a prolipoprotein, the first step in the formation of mature lipoproteins. This chain is Phosphatidylglycerol--prolipoprotein diacylglyceryl transferase, found in Prochlorococcus marinus (strain MIT 9312).